The following is a 414-amino-acid chain: 2,3-bisphosphoglycerate-independent phosphoglycerate mutase (414 aa).

This sequence belongs to the BPG-independent phosphoglycerate mutase family. A-PGAM subfamily.

The catalysed reaction is (2R)-2-phosphoglycerate = (2R)-3-phosphoglycerate. It participates in carbohydrate degradation; glycolysis; pyruvate from D-glyceraldehyde 3-phosphate: step 3/5. In terms of biological role, catalyzes the interconversion of 2-phosphoglycerate and 3-phosphoglycerate. This chain is 2,3-bisphosphoglycerate-independent phosphoglycerate mutase, found in Saccharolobus islandicus (strain L.S.2.15 / Lassen #1) (Sulfolobus islandicus).